The chain runs to 119 residues: MSYINKKGKTTSWRLMVIRQQVSEVIANNQITTTLTKAKETRKHVDRIITLAKKNTLASRRAAAAILLDTSISTKDQLIQKLFTDLQKKYTSRNGGYTRILKLGRRKGDNVEEAILQLV.

The protein belongs to the bacterial ribosomal protein bL17 family. As to quaternary structure, part of the 50S ribosomal subunit. Contacts protein L32.

The sequence is that of Large ribosomal subunit protein bL17 from Malacoplasma penetrans (strain HF-2) (Mycoplasma penetrans).